Reading from the N-terminus, the 292-residue chain is Coiled-coil domain-containing protein 137 (292 aa).

Over residues Met1 to Thr16 the composition is skewed to low complexity. 4 disordered regions span residues Met1–Ala94, Phe139–Ala183, Pro205–Ser243, and Ala263–Leu292. Composition is skewed to basic and acidic residues over residues Lys57 to Met78, Pro155 to Lys164, and Lys173 to Ala183. The stretch at Lys156–Thr194 forms a coiled coil. A compositionally biased stretch (low complexity) spans Lys222 to Ser232. Ser232 is modified (phosphoserine). Residues Gly234–Ser243 are compositionally biased toward polar residues. The stretch at Gln247 to Ser276 forms a coiled coil.

It is found in the chromosome. The chain is Coiled-coil domain-containing protein 137 (CCDC137) from Bos taurus (Bovine).